A 270-amino-acid polypeptide reads, in one-letter code: Monofunctional glycosyltransferase (270 aa).

Residues 1–35 form a disordered region; the sequence is MKRSDRYKTYNKPNDSNDSNQLHHNTYFKPVNKPQ. The segment covering 11-24 has biased composition (polar residues); sequence NKPNDSNDSNQLHH. A helical membrane pass occupies residues 47–67; that stretch reads LLIPILIIIGIIIGVMYALSL.

Belongs to the glycosyltransferase 51 family.

Its subcellular location is the cell membrane. The catalysed reaction is [GlcNAc-(1-&gt;4)-Mur2Ac(oyl-L-Ala-gamma-D-Glu-L-Lys-D-Ala-D-Ala)](n)-di-trans,octa-cis-undecaprenyl diphosphate + beta-D-GlcNAc-(1-&gt;4)-Mur2Ac(oyl-L-Ala-gamma-D-Glu-L-Lys-D-Ala-D-Ala)-di-trans,octa-cis-undecaprenyl diphosphate = [GlcNAc-(1-&gt;4)-Mur2Ac(oyl-L-Ala-gamma-D-Glu-L-Lys-D-Ala-D-Ala)](n+1)-di-trans,octa-cis-undecaprenyl diphosphate + di-trans,octa-cis-undecaprenyl diphosphate + H(+). It participates in cell wall biogenesis; peptidoglycan biosynthesis. Its function is as follows. Peptidoglycan polymerase that catalyzes glycan chain elongation using lipid-linked disaccharide-pentapeptide as the substrate. The sequence is that of Monofunctional glycosyltransferase from Staphylococcus saprophyticus subsp. saprophyticus (strain ATCC 15305 / DSM 20229 / NCIMB 8711 / NCTC 7292 / S-41).